We begin with the raw amino-acid sequence, 353 residues long: Holliday junction branch migration complex subunit RuvB (353 aa).

A disordered region spans residues 1-25; sequence MDPGPAGDEVSLAPQQETAEQDVET. The tract at residues 1–188 is large ATPase domain (RuvB-L); it reads MDPGPAGDEV…FGFTAHMEFY (188 aa). ATP-binding positions include Leu-27, Arg-28, Gly-69, Lys-72, Thr-73, Ser-74, 135–137, Arg-178, Tyr-188, and Arg-225; that span reads EDY. Thr-73 provides a ligand contact to Mg(2+). A small ATPAse domain (RuvB-S) region spans residues 189–259; it reads EPAELELVVR…VARAALEVYD (71 aa). The tract at residues 262 to 353 is head domain (RuvB-H); the sequence is EHGLDRLDRA…ATRSLFADEV (92 aa). DNA contacts are provided by Arg-317 and Arg-322.

It belongs to the RuvB family. In terms of assembly, homohexamer. Forms an RuvA(8)-RuvB(12)-Holliday junction (HJ) complex. HJ DNA is sandwiched between 2 RuvA tetramers; dsDNA enters through RuvA and exits via RuvB. An RuvB hexamer assembles on each DNA strand where it exits the tetramer. Each RuvB hexamer is contacted by two RuvA subunits (via domain III) on 2 adjacent RuvB subunits; this complex drives branch migration. In the full resolvosome a probable DNA-RuvA(4)-RuvB(12)-RuvC(2) complex forms which resolves the HJ.

The protein resides in the cytoplasm. The catalysed reaction is ATP + H2O = ADP + phosphate + H(+). In terms of biological role, the RuvA-RuvB-RuvC complex processes Holliday junction (HJ) DNA during genetic recombination and DNA repair, while the RuvA-RuvB complex plays an important role in the rescue of blocked DNA replication forks via replication fork reversal (RFR). RuvA specifically binds to HJ cruciform DNA, conferring on it an open structure. The RuvB hexamer acts as an ATP-dependent pump, pulling dsDNA into and through the RuvAB complex. RuvB forms 2 homohexamers on either side of HJ DNA bound by 1 or 2 RuvA tetramers; 4 subunits per hexamer contact DNA at a time. Coordinated motions by a converter formed by DNA-disengaged RuvB subunits stimulates ATP hydrolysis and nucleotide exchange. Immobilization of the converter enables RuvB to convert the ATP-contained energy into a lever motion, pulling 2 nucleotides of DNA out of the RuvA tetramer per ATP hydrolyzed, thus driving DNA branch migration. The RuvB motors rotate together with the DNA substrate, which together with the progressing nucleotide cycle form the mechanistic basis for DNA recombination by continuous HJ branch migration. Branch migration allows RuvC to scan DNA until it finds its consensus sequence, where it cleaves and resolves cruciform DNA. In Saccharopolyspora erythraea (strain ATCC 11635 / DSM 40517 / JCM 4748 / NBRC 13426 / NCIMB 8594 / NRRL 2338), this protein is Holliday junction branch migration complex subunit RuvB.